The chain runs to 285 residues: Ribosomal protein L11 methyltransferase (285 aa).

The S-adenosyl-L-methionine site is built by threonine 131, glycine 154, aspartate 176, and asparagine 223.

It belongs to the methyltransferase superfamily. PrmA family.

The protein localises to the cytoplasm. It carries out the reaction L-lysyl-[protein] + 3 S-adenosyl-L-methionine = N(6),N(6),N(6)-trimethyl-L-lysyl-[protein] + 3 S-adenosyl-L-homocysteine + 3 H(+). Methylates ribosomal protein L11. This chain is Ribosomal protein L11 methyltransferase, found in Brucella melitensis biotype 2 (strain ATCC 23457).